The chain runs to 78 residues: Large ribosomal subunit protein bL28 (78 aa).

This sequence belongs to the bacterial ribosomal protein bL28 family.

The chain is Large ribosomal subunit protein bL28 from Legionella pneumophila (strain Paris).